Consider the following 968-residue polypeptide: RNA polymerase-associated protein RapA (968 aa).

The region spanning aspartate 164–asparagine 334 is the Helicase ATP-binding domain. Residue aspartate 177–threonine 184 coordinates ATP. Positions aspartate 280–histidine 283 match the DEAH box motif. Residues arginine 490 to glycine 662 enclose the Helicase C-terminal domain.

This sequence belongs to the SNF2/RAD54 helicase family. RapA subfamily. Interacts with the RNAP. Has a higher affinity for the core RNAP than for the holoenzyme. Its ATPase activity is stimulated by binding to RNAP.

Its function is as follows. Transcription regulator that activates transcription by stimulating RNA polymerase (RNAP) recycling in case of stress conditions such as supercoiled DNA or high salt concentrations. Probably acts by releasing the RNAP, when it is trapped or immobilized on tightly supercoiled DNA. Does not activate transcription on linear DNA. Probably not involved in DNA repair. The chain is RNA polymerase-associated protein RapA from Escherichia coli O127:H6 (strain E2348/69 / EPEC).